The following is a 337-amino-acid chain: GTP 3',8-cyclase (337 aa).

Residues 1–226 enclose the Radical SAM core domain; it reads MNRVDYLRIS…REKIRQKWGL (226 aa). Arginine 8 serves as a coordination point for GTP. Cysteine 15 and cysteine 19 together coordinate [4Fe-4S] cluster. An S-adenosyl-L-methionine-binding site is contributed by tyrosine 21. Cysteine 22 lines the [4Fe-4S] cluster pocket. Residue arginine 60 participates in GTP binding. Glycine 64 is an S-adenosyl-L-methionine binding site. Threonine 91 contacts GTP. Serine 115 serves as a coordination point for S-adenosyl-L-methionine. Lysine 155 lines the GTP pocket. Residue methionine 189 coordinates S-adenosyl-L-methionine. Residues cysteine 260 and cysteine 263 each coordinate [4Fe-4S] cluster. GTP is bound at residue 265–267; the sequence is RMR. [4Fe-4S] cluster is bound at residue cysteine 277.

Belongs to the radical SAM superfamily. MoaA family. As to quaternary structure, monomer and homodimer. [4Fe-4S] cluster serves as cofactor.

It carries out the reaction GTP + AH2 + S-adenosyl-L-methionine = (8S)-3',8-cyclo-7,8-dihydroguanosine 5'-triphosphate + 5'-deoxyadenosine + L-methionine + A + H(+). It functions in the pathway cofactor biosynthesis; molybdopterin biosynthesis. Its function is as follows. Catalyzes the cyclization of GTP to (8S)-3',8-cyclo-7,8-dihydroguanosine 5'-triphosphate. The polypeptide is GTP 3',8-cyclase (Crocosphaera subtropica (strain ATCC 51142 / BH68) (Cyanothece sp. (strain ATCC 51142))).